Here is a 173-residue protein sequence, read N- to C-terminus: Bifunctional protein PyrR (173 aa).

Residues 93 to 105 carry the PRPP-binding motif; it reads VILIDDVLYTGRT.

The protein belongs to the purine/pyrimidine phosphoribosyltransferase family. PyrR subfamily. As to quaternary structure, homodimer and homohexamer; in equilibrium.

The enzyme catalyses UMP + diphosphate = 5-phospho-alpha-D-ribose 1-diphosphate + uracil. Regulates transcriptional attenuation of the pyrimidine nucleotide (pyr) operon by binding in a uridine-dependent manner to specific sites on pyr mRNA. This disrupts an antiterminator hairpin in the RNA and favors formation of a downstream transcription terminator, leading to a reduced expression of downstream genes. Its function is as follows. Also displays a weak uracil phosphoribosyltransferase activity which is not physiologically significant. The polypeptide is Bifunctional protein PyrR (Streptococcus pyogenes serotype M12 (strain MGAS2096)).